Reading from the N-terminus, the 372-residue chain is DNA replication and repair protein RecF (372 aa).

30–37 (GENGQGKT) is an ATP binding site.

This sequence belongs to the RecF family.

The protein localises to the cytoplasm. Its function is as follows. The RecF protein is involved in DNA metabolism; it is required for DNA replication and normal SOS inducibility. RecF binds preferentially to single-stranded, linear DNA. It also seems to bind ATP. This Anaeromyxobacter dehalogenans (strain 2CP-C) protein is DNA replication and repair protein RecF.